Consider the following 211-residue polypeptide: Protein-L-isoaspartate O-methyltransferase (211 aa).

Serine 62 is a catalytic residue.

This sequence belongs to the methyltransferase superfamily. L-isoaspartyl/D-aspartyl protein methyltransferase family.

It localises to the cytoplasm. It catalyses the reaction [protein]-L-isoaspartate + S-adenosyl-L-methionine = [protein]-L-isoaspartate alpha-methyl ester + S-adenosyl-L-homocysteine. Its function is as follows. Catalyzes the methyl esterification of L-isoaspartyl residues in peptides and proteins that result from spontaneous decomposition of normal L-aspartyl and L-asparaginyl residues. It plays a role in the repair and/or degradation of damaged proteins. The chain is Protein-L-isoaspartate O-methyltransferase from Shewanella halifaxensis (strain HAW-EB4).